Here is a 578-residue protein sequence, read N- to C-terminus: Proline--tRNA ligase (578 aa).

Belongs to the class-II aminoacyl-tRNA synthetase family. ProS type 1 subfamily. As to quaternary structure, homodimer.

It localises to the cytoplasm. It catalyses the reaction tRNA(Pro) + L-proline + ATP = L-prolyl-tRNA(Pro) + AMP + diphosphate. In terms of biological role, catalyzes the attachment of proline to tRNA(Pro) in a two-step reaction: proline is first activated by ATP to form Pro-AMP and then transferred to the acceptor end of tRNA(Pro). As ProRS can inadvertently accommodate and process non-cognate amino acids such as alanine and cysteine, to avoid such errors it has two additional distinct editing activities against alanine. One activity is designated as 'pretransfer' editing and involves the tRNA(Pro)-independent hydrolysis of activated Ala-AMP. The other activity is designated 'posttransfer' editing and involves deacylation of mischarged Ala-tRNA(Pro). The misacylated Cys-tRNA(Pro) is not edited by ProRS. This is Proline--tRNA ligase from Burkholderia ambifaria (strain MC40-6).